Reading from the N-terminus, the 1278-residue chain is ABC transporter B family member 11 (1278 aa).

Composition is skewed to basic and acidic residues over residues 1–13 and 21–35; these read MNGD…DSVS and SPKE…EKSE. The segment at 1–35 is disordered; that stretch reads MNGDGAREGDSVSHEPSTSKSPKEGEETKKEEKSE. 6 helical membrane-spanning segments follow: residues 55-75, 106-126, 182-202, 205-225, 285-305, and 314-334; these read VLLM…LPFM, FVYL…CWMI, FIQL…KGWL, LVML…ALIV, GLGL…AIWF, and GYTG…SMSL. The region spanning 58-346 is the ABC transmembrane type-1 1 domain; that stretch reads MICGSIGAIG…TSPCVTAFAA (289 aa). The 237-residue stretch at 381–617 folds into the ABC transporter 1 domain; it reads IELKDVHFSY…SEGAYSQLIR (237 aa). Residue 416 to 423 participates in ATP binding; sequence GESGSGKS. N-linked (GlcNAc...) asparagine glycans are attached at residues N483, N568, and N653. Polar residues predominate over residues 629-654; the sequence is ELSSGSSFRNSNLKKSMEGTSSVGNS. The segment at 629–656 is disordered; sequence ELSSGSSFRNSNLKKSMEGTSSVGNSSR. The 288-residue stretch at 710 to 997 folds into the ABC transmembrane type-1 2 domain; the sequence is LLLGTVAAAI…SSTFAPDSSK (288 aa). A run of 2 helical transmembrane segments spans residues 711–731 and 751–771; these read LLGT…GILI and FWAI…PTQM. A glycan (N-linked (GlcNAc...) asparagine) is linked at N806. A run of 4 helical transmembrane segments spans residues 824 to 844, 845 to 865, 932 to 952, and 971 to 991; these read ALVG…ASGL, IIAF…LPLI, GFIS…VYAT, and VFQV…SSTF. In terms of domain architecture, ABC transporter 2 spans 1032 to 1271; the sequence is IELRHLSFTY…EGGVYASLVQ (240 aa). An ATP-binding site is contributed by 1067–1074; the sequence is GESGSGKS. N1121 and N1222 each carry an N-linked (GlcNAc...) asparagine glycan.

Belongs to the ABC transporter superfamily. ABCB family. Multidrug resistance exporter (TC 3.A.1.201) subfamily. As to expression, present in roots and flower buds.

The protein resides in the membrane. The catalysed reaction is (indol-3-yl)acetate(in) + ATP + H2O = (indol-3-yl)acetate(out) + ADP + phosphate + H(+). Involved in the regulation of auxin transport required for pistil elongation. The polypeptide is ABC transporter B family member 11 (Arabidopsis thaliana (Mouse-ear cress)).